The sequence spans 203 residues: Gramillins biosynthetic cluster protein FGSG_00038 (203 aa).

It participates in mycotoxin biosynthesis. Part of the gene cluster that mediates the biosynthesis of gramillins A and B, bicyclic lipopeptides that induce cell death in maize leaves but not in wheat leaves. The nonribosomal peptide synthetase GRA1 incorporates respectively a glutamic adic (Glu), a leucine (Leu), a serine (Ser), a hydroxyglutamine (HOGln), a 2-amino decanoic acid, and 2 cysteins (CysB and CysA). The biosynthesis of 2-amino decanoic acid incorporated in gramillins could be initiated by a fatty acid synthase composed of the alpha and beta subunits FGSG_00036 and FGSG_11656. The cytochrome P450 monooxygenase FGSG_15680 could hydroxylate the fatty acid chain. Subsequent oxidation to the ketone by the oxidoreductase FGSG_00048 and transamination by aminotransferase FGSG_00049 could form 2-amino-decanoic acid. On the other hand, FGSG_15680 could also be responsible for the HO-modified glutamine at the gamma-position. Whether hydroxylation occurs on the fully assembled product or on the Gln residue prior to assembly into the gramillins requires further proof. The thioredoxin FGSG_00043 could also be required for the disulfide-bond formation between CysA and CysB. The specific involvement of the remaining proteins from the cluster is more difficult to discern, but could have broader regulatory (FGSG_00040 and FGSG_11657) or enzymatic functions (FGSG_00044 and FGSG_00045). The final C-domain of GRA1 does not possess the expected sequence of a termination CT domain, often implicated in macrocyclization and release of a cyclopeptidein fungal NRPs; and the thioesterase FGSG_00047 may act in concert with the terminal C-domain of GRA1 to catalyze the formation of the macrocyclic anhydride and release of the products. The sequence is that of Gramillins biosynthetic cluster protein FGSG_00038 from Gibberella zeae (strain ATCC MYA-4620 / CBS 123657 / FGSC 9075 / NRRL 31084 / PH-1) (Wheat head blight fungus).